An 813-amino-acid polypeptide reads, in one-letter code: Acyl-homoserine lactone acylase QuiP (813 aa).

The first 26 residues, 1–26, serve as a signal peptide directing secretion; it reads MAAPAFPPFRLRFATAATLLGMLGLA. Catalysis depends on serine 262, which acts as the Nucleophile.

The protein belongs to the peptidase S45 family. Heterodimer of an alpha subunit and a beta subunit processed from the same precursor.

The protein localises to the periplasm. It catalyses the reaction an N-acyl-L-homoserine lactone + H2O = L-homoserine lactone + a carboxylate. Catalyzes the deacylation of acyl-homoserine lactone (AHL or acyl-HSL), releasing homoserine lactone (HSL) and the corresponding fatty acid. Possesses a specificity for the degradation of long-chain acyl-HSLs (side chains of seven or more carbons in length). The sequence is that of Acyl-homoserine lactone acylase QuiP (quiP) from Pseudomonas putida (strain ATCC 47054 / DSM 6125 / CFBP 8728 / NCIMB 11950 / KT2440).